Here is a 208-residue protein sequence, read N- to C-terminus: Crossover junction endodeoxyribonuclease RuvC (208 aa).

Catalysis depends on residues D9, E70, and D143. D9, E70, and D143 together coordinate Mg(2+).

This sequence belongs to the RuvC family. As to quaternary structure, homodimer which binds Holliday junction (HJ) DNA. The HJ becomes 2-fold symmetrical on binding to RuvC with unstacked arms; it has a different conformation from HJ DNA in complex with RuvA. In the full resolvosome a probable DNA-RuvA(4)-RuvB(12)-RuvC(2) complex forms which resolves the HJ. Mg(2+) serves as cofactor.

It is found in the cytoplasm. It catalyses the reaction Endonucleolytic cleavage at a junction such as a reciprocal single-stranded crossover between two homologous DNA duplexes (Holliday junction).. Its function is as follows. The RuvA-RuvB-RuvC complex processes Holliday junction (HJ) DNA during genetic recombination and DNA repair. Endonuclease that resolves HJ intermediates. Cleaves cruciform DNA by making single-stranded nicks across the HJ at symmetrical positions within the homologous arms, yielding a 5'-phosphate and a 3'-hydroxyl group; requires a central core of homology in the junction. The consensus cleavage sequence is 5'-(A/T)TT(C/G)-3'. Cleavage occurs on the 3'-side of the TT dinucleotide at the point of strand exchange. HJ branch migration catalyzed by RuvA-RuvB allows RuvC to scan DNA until it finds its consensus sequence, where it cleaves and resolves the cruciform DNA. In Leifsonia xyli subsp. xyli (strain CTCB07), this protein is Crossover junction endodeoxyribonuclease RuvC.